Here is a 499-residue protein sequence, read N- to C-terminus: Phenylalanine--tRNA ligase alpha subunit (499 aa).

Residues T333, 372-374, and Y412 contribute to the L-phenylalanine site; that span reads QIE. E414 lines the Mg(2+) pocket. F436 contacts L-phenylalanine.

The protein belongs to the class-II aminoacyl-tRNA synthetase family. Phe-tRNA synthetase alpha subunit type 2 subfamily. In terms of assembly, tetramer of two alpha and two beta subunits. Mg(2+) is required as a cofactor.

The protein localises to the cytoplasm. The catalysed reaction is tRNA(Phe) + L-phenylalanine + ATP = L-phenylalanyl-tRNA(Phe) + AMP + diphosphate + H(+). The protein is Phenylalanine--tRNA ligase alpha subunit of Thermoplasma acidophilum (strain ATCC 25905 / DSM 1728 / JCM 9062 / NBRC 15155 / AMRC-C165).